A 150-amino-acid polypeptide reads, in one-letter code: MNLSGIKPPKGQVKTKKRIGRGMGSGHGKTATRGSKGQHAGTGFSQKRGFEGGQMPLHRRLPKRGFKNIFKKQFAIVNLGRLEKLEGNSFTIDTMLQLGLINKVYDGVKVLGTGVLTRKITVEAHHFSKSALEKIQQAGGTAQMIGAETK.

Residues Met-1–His-58 are disordered.

It belongs to the universal ribosomal protein uL15 family. Part of the 50S ribosomal subunit.

Binds to the 23S rRNA. The chain is Large ribosomal subunit protein uL15 from Solibacter usitatus (strain Ellin6076).